A 201-amino-acid chain; its full sequence is Large ribosomal subunit protein uL4 (201 aa).

Residues 45–71 (AQKTRAEVTGSGKKPWRQKGTGRARAG) are disordered.

This sequence belongs to the universal ribosomal protein uL4 family. As to quaternary structure, part of the 50S ribosomal subunit.

Functionally, one of the primary rRNA binding proteins, this protein initially binds near the 5'-end of the 23S rRNA. It is important during the early stages of 50S assembly. It makes multiple contacts with different domains of the 23S rRNA in the assembled 50S subunit and ribosome. In terms of biological role, forms part of the polypeptide exit tunnel. This chain is Large ribosomal subunit protein uL4, found in Shewanella sp. (strain MR-4).